An 87-amino-acid polypeptide reads, in one-letter code: U15-lycotoxin-Ls1h (87 aa).

Positions 1 to 20 (MNSKIFAVLLLLGLLSCVLS) are cleaved as a signal peptide. A WAP domain is found at 21–66 (DQYCPKSSITACKKMNTRNDCCKDDDCTGGSWCCATPCGNFCKYPT). Cystine bridges form between Cys-24-Cys-54, Cys-32-Cys-58, Cys-41-Cys-53, Cys-42-Cys-80, and Cys-47-Cys-62.

The protein belongs to the venom protein 11 family. 01 (wap-1) subfamily. Post-translationally, contains 5 disulfide bonds. Expressed by the venom gland.

It is found in the secreted. Its function is as follows. Has antibacterial activity. The polypeptide is U15-lycotoxin-Ls1h (Lycosa singoriensis (Wolf spider)).